A 454-amino-acid polypeptide reads, in one-letter code: Guanine deaminase (454 aa).

2 residues coordinate Zn(2+): His82 and His84. Substrate contacts are provided by residues 84–87, 213–214, 240–243, and Asp330; these read HASQ, RF, and HISE. The Zn(2+) site is built by His240 and Asp330. Ser453 carries the phosphoserine modification.

This sequence belongs to the metallo-dependent hydrolases superfamily. ATZ/TRZ family. As to quaternary structure, homodimer. The cofactor is Zn(2+).

The enzyme catalyses guanine + H2O + H(+) = xanthine + NH4(+). The protein operates within purine metabolism; guanine degradation; xanthine from guanine: step 1/1. Functionally, catalyzes the hydrolytic deamination of guanine, producing xanthine and ammonia. The sequence is that of Guanine deaminase from Homo sapiens (Human).